The chain runs to 379 residues: Chaperone protein DnaJ (379 aa).

The region spanning aspartate 5 to glycine 70 is the J domain. Residues glycine 139–glutamine 217 form a CR-type zinc finger. Cysteine 152, cysteine 155, cysteine 169, cysteine 172, cysteine 191, cysteine 194, cysteine 205, and cysteine 208 together coordinate Zn(2+). 4 CXXCXGXG motif repeats span residues cysteine 152–glycine 159, cysteine 169–glycine 176, cysteine 191–glycine 198, and cysteine 205–glycine 212. Residues valine 356–serine 379 are disordered.

The protein belongs to the DnaJ family. In terms of assembly, homodimer. The cofactor is Zn(2+).

The protein resides in the cytoplasm. In terms of biological role, participates actively in the response to hyperosmotic and heat shock by preventing the aggregation of stress-denatured proteins and by disaggregating proteins, also in an autonomous, DnaK-independent fashion. Unfolded proteins bind initially to DnaJ; upon interaction with the DnaJ-bound protein, DnaK hydrolyzes its bound ATP, resulting in the formation of a stable complex. GrpE releases ADP from DnaK; ATP binding to DnaK triggers the release of the substrate protein, thus completing the reaction cycle. Several rounds of ATP-dependent interactions between DnaJ, DnaK and GrpE are required for fully efficient folding. Also involved, together with DnaK and GrpE, in the DNA replication of plasmids through activation of initiation proteins. This chain is Chaperone protein DnaJ, found in Cupriavidus pinatubonensis (strain JMP 134 / LMG 1197) (Cupriavidus necator (strain JMP 134)).